A 626-amino-acid chain; its full sequence is DNA topoisomerase 4 subunit A (626 aa).

Residues 24–439 (IASVVDGFKP…RGYSINFIDL (416 aa)) enclose the Topo IIA-type catalytic domain. The active-site O-(5'-phospho-DNA)-tyrosine intermediate is the tyrosine 105.

Belongs to the type II topoisomerase GyrA/ParC subunit family. Heterotetramer composed of ParC and ParE.

It localises to the cell membrane. The catalysed reaction is ATP-dependent breakage, passage and rejoining of double-stranded DNA.. Topoisomerase IV is essential for chromosome segregation. It relaxes supercoiled DNA. Performs the decatenation events required during the replication of a circular DNA molecule. The sequence is that of DNA topoisomerase 4 subunit A (parC) from Borreliella burgdorferi (strain ATCC 35210 / DSM 4680 / CIP 102532 / B31) (Borrelia burgdorferi).